The chain runs to 166 residues: Phosphopantetheine adenylyltransferase (166 aa).

Serine 9 lines the substrate pocket. ATP contacts are provided by residues serine 9–phenylalanine 10 and histidine 17. Positions 41, 74, and 88 each coordinate substrate. ATP is bound by residues glycine 89–arginine 91, glutamate 99, and aspartate 124–serine 130.

The protein belongs to the bacterial CoaD family. In terms of assembly, homohexamer. Mg(2+) is required as a cofactor.

The protein localises to the cytoplasm. It catalyses the reaction (R)-4'-phosphopantetheine + ATP + H(+) = 3'-dephospho-CoA + diphosphate. It participates in cofactor biosynthesis; coenzyme A biosynthesis; CoA from (R)-pantothenate: step 4/5. Reversibly transfers an adenylyl group from ATP to 4'-phosphopantetheine, yielding dephospho-CoA (dPCoA) and pyrophosphate. In Lactobacillus johnsonii (strain CNCM I-12250 / La1 / NCC 533), this protein is Phosphopantetheine adenylyltransferase.